Here is a 394-residue protein sequence, read N- to C-terminus: Elongation factor Tu 1 (394 aa).

Residues 9 to 204 (KPHCNIGTIG…AIDDYIPQPT (196 aa)) enclose the tr-type G domain. A G1 region spans residues 18–25 (GHVDHGKT). Position 18–25 (18–25 (GHVDHGKT)) interacts with GTP. Threonine 25 contributes to the Mg(2+) binding site. Residues 61 to 65 (GITIQ) are G2. A G3 region spans residues 82-85 (DCPG). Residues 82–86 (DCPGH) and 137–140 (NKID) contribute to the GTP site. The interval 137–140 (NKID) is G4. Residues 174-176 (SAL) form a G5 region.

It belongs to the TRAFAC class translation factor GTPase superfamily. Classic translation factor GTPase family. EF-Tu/EF-1A subfamily. Monomer.

It is found in the cytoplasm. The enzyme catalyses GTP + H2O = GDP + phosphate + H(+). Functionally, GTP hydrolase that promotes the GTP-dependent binding of aminoacyl-tRNA to the A-site of ribosomes during protein biosynthesis. This is Elongation factor Tu 1 from Orientia tsutsugamushi (strain Boryong) (Rickettsia tsutsugamushi).